The following is a 407-amino-acid chain: S-adenosylmethionine synthase (407 aa).

Position 140-145 (140-145 (GQGSAD)) interacts with ATP.

Belongs to the AdoMet synthase 2 family. Mg(2+) serves as cofactor.

It carries out the reaction L-methionine + ATP + H2O = S-adenosyl-L-methionine + phosphate + diphosphate. Its pathway is amino-acid biosynthesis; S-adenosyl-L-methionine biosynthesis; S-adenosyl-L-methionine from L-methionine: step 1/1. Its function is as follows. Catalyzes the formation of S-adenosylmethionine from methionine and ATP. The sequence is that of S-adenosylmethionine synthase from Methanosphaera stadtmanae (strain ATCC 43021 / DSM 3091 / JCM 11832 / MCB-3).